The following is a 344-amino-acid chain: tRNA N6-adenosine threonylcarbamoyltransferase (344 aa).

Fe cation contacts are provided by His111 and His115. Substrate-binding positions include 134–138 (LVSGG), Asp167, Gly180, and Asn273. Residue Asp301 coordinates Fe cation.

It belongs to the KAE1 / TsaD family. It depends on Fe(2+) as a cofactor.

Its subcellular location is the cytoplasm. It carries out the reaction L-threonylcarbamoyladenylate + adenosine(37) in tRNA = N(6)-L-threonylcarbamoyladenosine(37) in tRNA + AMP + H(+). Its function is as follows. Required for the formation of a threonylcarbamoyl group on adenosine at position 37 (t(6)A37) in tRNAs that read codons beginning with adenine. Is involved in the transfer of the threonylcarbamoyl moiety of threonylcarbamoyl-AMP (TC-AMP) to the N6 group of A37, together with TsaE and TsaB. TsaD likely plays a direct catalytic role in this reaction. This is tRNA N6-adenosine threonylcarbamoyltransferase from Cupriavidus pinatubonensis (strain JMP 134 / LMG 1197) (Cupriavidus necator (strain JMP 134)).